The chain runs to 97 residues: UPF0235 protein Daro_3887 (97 aa).

The protein belongs to the UPF0235 family.

The sequence is that of UPF0235 protein Daro_3887 from Dechloromonas aromatica (strain RCB).